The following is a 440-amino-acid chain: 23S rRNA (uracil(1939)-C(5))-methyltransferase RlmD (440 aa).

The segment at 1–21 (MRRRTSPRRTTTSKPQPIGPI) is disordered. The 59-residue stretch at 15-73 (PQPIGPIQTFEVDGLTHEAKGVARLQGKVTFIEGALPGETVEAQVNKAGRRFDEAVLVN) folds into the TRAM domain. [4Fe-4S] cluster contacts are provided by Cys86, Cys92, Cys95, and Cys169. Gln273, Phe302, Asn307, Glu323, Asp350, and Asp370 together coordinate S-adenosyl-L-methionine. Cys396 (nucleophile) is an active-site residue.

The protein belongs to the class I-like SAM-binding methyltransferase superfamily. RNA M5U methyltransferase family. RlmD subfamily.

The catalysed reaction is uridine(1939) in 23S rRNA + S-adenosyl-L-methionine = 5-methyluridine(1939) in 23S rRNA + S-adenosyl-L-homocysteine + H(+). Functionally, catalyzes the formation of 5-methyl-uridine at position 1939 (m5U1939) in 23S rRNA. This is 23S rRNA (uracil(1939)-C(5))-methyltransferase RlmD from Marinomonas sp. (strain MWYL1).